A 681-amino-acid chain; its full sequence is DNA-directed RNA polymerase subunit beta' (681 aa).

Residues Cys69, Cys71, Cys87, and Cys90 each contribute to the Zn(2+) site. The Mg(2+) site is built by Asp489, Asp491, and Asp493.

The protein belongs to the RNA polymerase beta' chain family. RpoC1 subfamily. As to quaternary structure, in plastids the minimal PEP RNA polymerase catalytic core is composed of four subunits: alpha, beta, beta', and beta''. When a (nuclear-encoded) sigma factor is associated with the core the holoenzyme is formed, which can initiate transcription. It depends on Mg(2+) as a cofactor. Requires Zn(2+) as cofactor.

The protein resides in the plastid. It is found in the chloroplast. The catalysed reaction is RNA(n) + a ribonucleoside 5'-triphosphate = RNA(n+1) + diphosphate. Functionally, DNA-dependent RNA polymerase catalyzes the transcription of DNA into RNA using the four ribonucleoside triphosphates as substrates. In Cycas taitungensis (Prince sago), this protein is DNA-directed RNA polymerase subunit beta'.